Consider the following 728-residue polypeptide: Fibulin-1 (728 aa).

The signal sequence occupies residues 1–17 (MRICFLLLAFLVAETFA). 30 cysteine pairs are disulfide-bonded: cysteine 23-cysteine 49, cysteine 24-cysteine 56, cysteine 37-cysteine 57, cysteine 66-cysteine 94, cysteine 79-cysteine 95, cysteine 97-cysteine 121, cysteine 98-cysteine 128, cysteine 111-cysteine 129, cysteine 159-cysteine 168, cysteine 164-cysteine 178, cysteine 180-cysteine 279, cysteine 285-cysteine 298, cysteine 292-cysteine 307, cysteine 347-cysteine 359, cysteine 353-cysteine 368, cysteine 375-cysteine 388, cysteine 394-cysteine 404, cysteine 399-cysteine 413, cysteine 415-cysteine 428, cysteine 434-cysteine 448, cysteine 442-cysteine 457, cysteine 459-cysteine 472, cysteine 478-cysteine 489, cysteine 485-cysteine 498, cysteine 500-cysteine 513, cysteine 519-cysteine 534, cysteine 530-cysteine 543, cysteine 545-cysteine 558, cysteine 564-cysteine 576, and cysteine 569-cysteine 585. Anaphylatoxin-like domains are found at residues 23–64 (CCAG…LLDN), 65–96 (ACDSGTDIAKEEESCPSNINILGGGLKKECCD), and 97–129 (CCLLAKDLLNRNEPCVAPVGFSAGCLRSFNKCC). Residues 155–194 (LGDRCASSHCEHLCHDRGGEKVECSCRSGFDLAPDGMACV) form the EGF-like 1 domain. Residues 195–280 (DRNECLTRQS…GWLFQHGHCV (86 aa)) form the EGF-like 2; calcium-binding domain. Positions 281–344 (DVDECNLGSH…YPKNGMCNDI (64 aa)) constitute an EGF-like 3; calcium-binding domain. An EGF-like 4; calcium-binding domain is found at 343 to 389 (DIDECVTGHNCGAGEECVNTPGSFRCQQKGNLCAHGYEVNGATGFCE). In terms of domain architecture, EGF-like 5; calcium-binding spans 390-429 (DVNECQQGVCGSMECINLPGTYKCKCGPGYEFNDAKKRCE). Residues 430–473 (DVDECIKFAGHVCDLSAECINTIGSFECKCKPGFQLASDGRRCE) enclose the EGF-like 6; calcium-binding domain. The region spanning 474–514 (DVNECTTGIAACEQKCVNIPGSYQCICDRGFALGPDGTKCE) is the EGF-like 7; calcium-binding domain. The EGF-like 8; calcium-binding domain occupies 515 to 559 (DIDECSIWAGSGNDLCMGGCINTKGSYLCQCPPGYKIQPDGRTCV). One can recognise an EGF-like 9; calcium-binding domain in the interval 560-610 (DVDECAMGECAGSDKVCVNTLGSFKCHSIDCPTNYIHDSLNKNQIADGYSC). A glycan (N-linked (GlcNAc...) asparagine) is linked at asparagine 624.

Belongs to the fibulin family. Homomultimerizes and interacts with various extracellular matrix components. As to expression, expressed in head muscle cells, anterior and posterior intestinal cells. Isoform a: Expressed in male and hermaphrodite gonad, anterior and posterior intestine and pharyngeal basement membranes, body-wall muscle, GLR cells, uterine attachment and mechanosensory neurons. Isoform c: Expressed on ALM/PLM mechanosensory neuron attachments, in flexible tracks connecting the pharyngeal, body-wall-muscle basement membranes and in uterine attachments.

Its subcellular location is the secreted. It localises to the extracellular space. The protein localises to the extracellular matrix. It is found in the basement membrane. Functionally, incorporated into fibronectin-containing matrix fibers. Plays a role in cell adhesion and migration along protein fibers within the extracellular matrix (ECM). Important for certain developmental processes and contributes to the supramolecular organization of ECM architecture, in particular to those of basement membranes. Involved in regulating the shape and adhesion of cells in the developing pharynx, intestine, body-wall muscle and gonadal tissue. During gonadogenesis, regulates the width of gonads and the migration of distal tip cells (DTC). Together with type IV collagen let-2 and downstream of metalloprotease mig-17, recruits nidogen nid-1 to the gonad basement membrane thereby inducing basement membrane remodeling required for the directional migration of DTCs. Acts antagonistically with metalloprotease gon-1 to maintain optimal levels of type IV collagen emb-9 in the gonad basement membrane during gonadogenesis. Required for larval development. In terms of biological role, involved in the assembly of the flexible hemicentin-containing tracks found joining the pharynx and body-wall-muscle basement membranes. The polypeptide is Fibulin-1 (fbl-1) (Caenorhabditis elegans).